A 126-amino-acid chain; its full sequence is Glycine cleavage system H protein (126 aa).

The Lipoyl-binding domain occupies 22–104 (KLRIGITDFA…YEKAWMIVIE (83 aa)). At K63 the chain carries N6-lipoyllysine.

It belongs to the GcvH family. In terms of assembly, the glycine cleavage system is composed of four proteins: P, T, L and H. (R)-lipoate serves as cofactor.

Functionally, the glycine cleavage system catalyzes the degradation of glycine. The H protein shuttles the methylamine group of glycine from the P protein to the T protein. In terms of biological role, is also involved in protein lipoylation via its role as an octanoyl/lipoyl carrier protein intermediate. This Oceanobacillus iheyensis (strain DSM 14371 / CIP 107618 / JCM 11309 / KCTC 3954 / HTE831) protein is Glycine cleavage system H protein.